A 104-amino-acid chain; its full sequence is Protein MGF 110-2L (104 aa).

The N-terminal stretch at 1–19 (MRFFSYLGLLLAGLASLQG) is a signal peptide.

It belongs to the asfivirus MGF 110 family.

Functionally, plays a role in virus cell tropism, and may be required for efficient virus replication in macrophages. In African swine fever virus (isolate Tick/South Africa/Pretoriuskop Pr4/1996) (ASFV), this protein is Protein MGF 110-2L.